A 187-amino-acid polypeptide reads, in one-letter code: MGNKQTVFTHEQLEAYQDCTFFTRKEIMRLFYRYQDLAPQLVPLDYTTCPDVKVPYELIGSMPELKDNPFRQRIAQVFSEDGDGHMTLDNFLDMFSVMSEMAPRDLKAYYAFKIYDFNNDDYICAWDLEQTVTKLTRGGLSAEEVSLVCEKVLDEADGDHDGRLSLEDFQNMILRAPDFLSTFHIRI.

3 consecutive EF-hand domains span residues Lys-66 to Met-101, Pro-103 to Gly-138, and Glu-144 to Phe-179. Ca(2+) contacts are provided by Asp-116, Asn-118, Asp-120, Tyr-122, Asp-127, Asp-157, Asp-159, Asp-161, Arg-163, and Asp-168.

As to quaternary structure, monomer and homodimer. Interacts with ITGA2B (via C-terminus cytoplasmic tail region); the interaction is stabilized/increased in a calcium and magnesium-dependent manner. Interacts with TMC1.

In terms of biological role, acts a an auxiliary subunit of the sensory mechanoelectrical transduction (MET) channel in hair cells. Plays a role in regulating hair cell MET channel localization and function. The polypeptide is Calcium and integrin-binding family member 3 (CIB3) (Homo sapiens (Human)).